Consider the following 222-residue polypeptide: UPF0758 protein YicR (222 aa).

The MPN domain maps to proline 100–isoleucine 222. Residues histidine 171, histidine 173, and aspartate 184 each coordinate Zn(2+). Positions histidine 171–aspartate 184 match the JAMM motif motif.

The protein belongs to the UPF0758 family. YicR subfamily.

The polypeptide is UPF0758 protein YicR (Shigella dysenteriae serotype 1 (strain Sd197)).